Consider the following 686-residue polypeptide: L-type lectin-domain containing receptor kinase VII.1 (686 aa).

The N-terminal stretch at Met1–Ala20 is a signal peptide. A legume-lectin like region spans residues Ile21–Ser256. The Extracellular segment spans residues Ile21 to Trp286. N-linked (GlcNAc...) asparagine glycosylation is found at Asn29, Asn34, Asn52, Asn64, Asn111, Asn123, Asn168, Asn203, Asn224, and Asn259. The chain crosses the membrane as a helical span at residues Phe287–Phe307. Topologically, residues Ala308–Arg686 are cytoplasmic. Residues Phe347–Phe628 form the Protein kinase domain. Residues Ile353–Val361 and Lys376 contribute to the ATP site. Residue Asp475 is the Proton acceptor of the active site.

In the C-terminal section; belongs to the protein kinase superfamily. Ser/Thr protein kinase family. It in the N-terminal section; belongs to the leguminous lectin family.

It localises to the cell membrane. It carries out the reaction L-seryl-[protein] + ATP = O-phospho-L-seryl-[protein] + ADP + H(+). The catalysed reaction is L-threonyl-[protein] + ATP = O-phospho-L-threonyl-[protein] + ADP + H(+). This is L-type lectin-domain containing receptor kinase VII.1 (LECRK71) from Arabidopsis thaliana (Mouse-ear cress).